The following is an 811-amino-acid chain: Ribonucleoside-diphosphate reductase large chain (811 aa).

An ATP-cone domain is found at 1-92 (MFVYKRDGRQ…VSNLHKQTEK (92 aa)). Residues 5-6 (KR), 11-17 (EKVAFDK), T53, and D57 contribute to the ATP site. GDP contacts are provided by S202 and S217. Cysteines 218 and 444 form a disulfide. DTTP contacts are provided by residues 226-228 (DSI), K243, R256, and 263-264 (AG). N427 contributes to the GDP binding site. Residue N427 is the Proton acceptor of the active site. C429 functions as the Cysteine radical intermediate in the catalytic mechanism. GDP is bound by residues E431 and 603 to 606 (TAST). The Proton acceptor role is filled by E431.

It belongs to the ribonucleoside diphosphate reductase large chain family. As to quaternary structure, heterodimer of a large and a small subunit. Interacts with SPD1.

It catalyses the reaction a 2'-deoxyribonucleoside 5'-diphosphate + [thioredoxin]-disulfide + H2O = a ribonucleoside 5'-diphosphate + [thioredoxin]-dithiol. Its activity is regulated as follows. Under complex allosteric control mediated by deoxynucleoside triphosphates and ATP binding to separate specificity and activation sites on the large subunit. The type of nucleotide bound at the specificity site determines substrate preference. It seems probable that ATP makes the enzyme reduce CDP and UDP, dGTP favors ADP reduction and dTTP favors GDP reduction. Stimulated by ATP and inhibited by dATP binding to the activity site. Functionally, provides the precursors necessary for DNA synthesis. Catalyzes the biosynthesis of deoxyribonucleotides from the corresponding ribonucleotides. The sequence is that of Ribonucleoside-diphosphate reductase large chain (cdc22) from Schizosaccharomyces pombe (strain 972 / ATCC 24843) (Fission yeast).